Here is a 498-residue protein sequence, read N- to C-terminus: Zinc finger protein 497 (498 aa).

The disordered stretch occupies residues 30 to 104 (SEGAVSGGWG…LRPSPLPEEP (75 aa)). 14 consecutive C2H2-type zinc fingers follow at residues 106–128 (CRCG…RRVH), 134–156 (YTCP…QRIH), 162–184 (YACR…QETH), 190–212 (FRCP…RRTH), 218–240 (YECP…RRVH), 246–268 (HACR…LKIH), 274–296 (HACP…RRTH), 302–324 (FPCA…QRTH), 330–352 (FECA…RRVH), 358–380 (HACA…RRTH), 386–408 (FACA…RLSH), 414–436 (FACA…QRLH), 442–464 (FVCA…RRTH), and 470–492 (YACG…QKRH).

Belongs to the krueppel C2H2-type zinc-finger protein family.

The protein localises to the nucleus. In terms of biological role, may be involved in transcriptional regulation. This chain is Zinc finger protein 497 (ZNF497), found in Homo sapiens (Human).